Here is an 89-residue protein sequence, read N- to C-terminus: Small ribosomal subunit protein uS14 (89 aa).

It belongs to the universal ribosomal protein uS14 family. As to quaternary structure, part of the 30S ribosomal subunit. Contacts proteins S3 and S10.

Functionally, binds 16S rRNA, required for the assembly of 30S particles and may also be responsible for determining the conformation of the 16S rRNA at the A site. This chain is Small ribosomal subunit protein uS14, found in Akkermansia muciniphila (strain ATCC BAA-835 / DSM 22959 / JCM 33894 / BCRC 81048 / CCUG 64013 / CIP 107961 / Muc).